The primary structure comprises 91 residues: Small ubiquitin-related modifier (91 aa).

Residues 13–91 enclose the Ubiquitin-like domain; that stretch reads EYIKIKVVGQ…EVYQEQLGGF (79 aa). A Glycyl lysine isopeptide (Gly-Lys) (interchain with K-? in acceptor proteins) cross-link involves residue glycine 90. Residue phenylalanine 91 is a propeptide.

This sequence belongs to the ubiquitin family. SUMO subfamily. As to quaternary structure, covalently attached to tbx-2. Covalently attached to lin-1. Covalently attached to lin-11. Covalently attached to sop-2. Covalently attached to bet-1. Post-translationally, cleavage of precursor form by ulp-1 is necessary for function.

The protein resides in the cytoplasm. The protein localises to the nucleus. It is found in the cytoskeleton. It localises to the spindle. Its subcellular location is the chromosome. The protein resides in the microtubule organizing center. The protein localises to the centrosome. Functionally, ubiquitin-like protein which can be covalently attached to target lysines as a monomer. Does not seem to be involved in protein degradation and may function as an antagonist of ubiquitin in the degradation process. Plays a role in a number of cellular processes such as nuclear transport, DNA replication and repair, mitosis and signal transduction. Covalent attachment to its substrates requires prior activation by the E1 complex aos-1-uba-2 and linkage to the E2 enzyme ubc-9, and can be promoted by an E3 ligase such as gei-17. Required for embryonic development, fertility, vulval morphogenesis and inhibition of vulval cell fates. Probably by sumoylating bet-1, prevents muscle myosin depletion in aging adults probably by preventing myoblast growth factor receptor egl-15 overexpression. Plays a role in the attenuation of the let-60/ras pathway. Plays a role in male tail tip morphogenesis. Plays a role in the mitochondrial stress response with its covalent attachment to transcription factors dve-1 and afts-1 negatively regulating the mitochondrial unfolded protein response. The polypeptide is Small ubiquitin-related modifier (Caenorhabditis elegans).